Reading from the N-terminus, the 453-residue chain is MLQLKDKQVLVLGLGDTGLSALRWLARQGARLSVADSRALPPGLDAVRQEFPGMAIHLGPFTAAAFKEAELIVASPGVPVAEPQVQAAIERGVPVVGDVELFAQARSAHAKVIAITGANGKSTVTTLVGEICKAAGFKTVVAGNIGLPVLDVINDAVDVYVLELSSFQLETTYSLAADAATVLNISADHMDRYADMQAYANAKARIFTRAGLQVLNADDAWSRGMAAEGVAQLTFGLDAPRSAQDFGLLHDAGEAWLARGQRKLMPVADLNITGLHNAANALAALALCTVLDIDEVVALQALRDFKGLPHRVQWVADIDGVSFYDDSKGTNVGATVAALHGLNRKLVLIAGGDGKGQDFAALRAPVAKHARAVVLIGRDAGVIADALQESGVLLEYGDTLEEAVVKAFNLADRGDAVLLSPACASLDMFRNYVHRAEVFVKAVTDLQKKEVSA.

Residue 117–123 (GANGKST) coordinates ATP.

This sequence belongs to the MurCDEF family.

The protein resides in the cytoplasm. The enzyme catalyses UDP-N-acetyl-alpha-D-muramoyl-L-alanine + D-glutamate + ATP = UDP-N-acetyl-alpha-D-muramoyl-L-alanyl-D-glutamate + ADP + phosphate + H(+). Its pathway is cell wall biogenesis; peptidoglycan biosynthesis. Cell wall formation. Catalyzes the addition of glutamate to the nucleotide precursor UDP-N-acetylmuramoyl-L-alanine (UMA). This chain is UDP-N-acetylmuramoylalanine--D-glutamate ligase, found in Methylobacillus flagellatus (strain ATCC 51484 / DSM 6875 / VKM B-1610 / KT).